The primary structure comprises 453 residues: Obtusifoliol 14-alpha demethylase (453 aa).

A heme-binding site is contributed by cysteine 395.

This sequence belongs to the cytochrome P450 family. The cofactor is heme.

Its subcellular location is the membrane. The catalysed reaction is a 14alpha-methyl steroid + 3 reduced [NADPH--hemoprotein reductase] + 3 O2 = a Delta(14) steroid + formate + 3 oxidized [NADPH--hemoprotein reductase] + 4 H2O + 4 H(+). The protein operates within steroid biosynthesis; zymosterol biosynthesis; zymosterol from lanosterol: step 1/6. Its function is as follows. Catalyzes the 14-alpha demethylation of obtusifoliol to 4 alpha-methyl-5 alpha-ergosta-8,14,24(28)-trien-3 beta-ol. This is Obtusifoliol 14-alpha demethylase (CYP51) from Triticum aestivum (Wheat).